The chain runs to 374 residues: uncharacterized protein (374 aa).

A compositionally biased stretch (low complexity) spans 86–104 (RPAATAGTTPATGASGSAR). The tract at residues 86-109 (RPAATAGTTPATGASGSARPTDAA) is disordered. Residues 179–354 (WWRRSNTTRG…LQRVVFAVHG (176 aa)) enclose the Macro domain.

This is an uncharacterized protein from Mycobacterium tuberculosis (strain CDC 1551 / Oshkosh).